The chain runs to 379 residues: GDSL esterase/lipase At3g05180 (379 aa).

The signal sequence occupies residues 1-27 (METLFHTLLRLLLFVAISHTLSPLAGS). Catalysis depends on Ser-43, which acts as the Nucleophile. Asn-294 and Asn-330 each carry an N-linked (GlcNAc...) asparagine glycan. Active-site residues include Asp-349 and His-352.

The protein belongs to the 'GDSL' lipolytic enzyme family.

Its subcellular location is the secreted. This Arabidopsis thaliana (Mouse-ear cress) protein is GDSL esterase/lipase At3g05180.